The sequence spans 98 residues: MSADPRHYDVIVAPVITEKATNLSELNKVVFRVAPKATKPQIKEAVERLFEVKVKSVNTLITKGKTKMFRGQRGQRSDVKKAIVTLEEGQTIDVTTGL.

The protein belongs to the universal ribosomal protein uL23 family. Part of the 50S ribosomal subunit. Contacts protein L29, and trigger factor when it is bound to the ribosome.

One of the early assembly proteins it binds 23S rRNA. One of the proteins that surrounds the polypeptide exit tunnel on the outside of the ribosome. Forms the main docking site for trigger factor binding to the ribosome. The protein is Large ribosomal subunit protein uL23 of Methylobacterium sp. (strain 4-46).